A 359-amino-acid chain; its full sequence is UPF0283 membrane protein RL2646 (359 aa).

The segment at 1–48 (MSKPPSDPPRRAPAAFIYEDEATERRDNGRQGGERRKPESFSEHIVVT) is disordered. Residues 23–42 (TERRDNGRQGGERRKPESFS) show a composition bias toward basic and acidic residues. Helical transmembrane passes span 77–97 (FGKI…GLWT) and 111–131 (LGYA…ALVI).

Belongs to the UPF0283 family.

It localises to the cell inner membrane. The polypeptide is UPF0283 membrane protein RL2646 (Rhizobium johnstonii (strain DSM 114642 / LMG 32736 / 3841) (Rhizobium leguminosarum bv. viciae)).